A 515-amino-acid chain; its full sequence is Bifunctional purine biosynthesis protein PurH (515 aa).

Residues 1-145 (MTKRVLISVS…KNHASVTVVV (145 aa)) form the MGS-like domain.

Belongs to the PurH family.

It carries out the reaction (6R)-10-formyltetrahydrofolate + 5-amino-1-(5-phospho-beta-D-ribosyl)imidazole-4-carboxamide = 5-formamido-1-(5-phospho-D-ribosyl)imidazole-4-carboxamide + (6S)-5,6,7,8-tetrahydrofolate. The catalysed reaction is IMP + H2O = 5-formamido-1-(5-phospho-D-ribosyl)imidazole-4-carboxamide. The protein operates within purine metabolism; IMP biosynthesis via de novo pathway; 5-formamido-1-(5-phospho-D-ribosyl)imidazole-4-carboxamide from 5-amino-1-(5-phospho-D-ribosyl)imidazole-4-carboxamide (10-formyl THF route): step 1/1. It participates in purine metabolism; IMP biosynthesis via de novo pathway; IMP from 5-formamido-1-(5-phospho-D-ribosyl)imidazole-4-carboxamide: step 1/1. This is Bifunctional purine biosynthesis protein PurH from Streptococcus pneumoniae (strain P1031).